Here is a 473-residue protein sequence, read N- to C-terminus: Lactate utilization protein B 2 (473 aa).

4Fe-4S ferredoxin-type domains are found at residues 302 to 332 (GSEFRSILQCIRCAACVNVCPVYRHVGGHSY) and 351 to 380 (YDDYKELPYASSLCGACTEACPVKIPLHDL). [4Fe-4S] cluster-binding residues include cysteine 311, cysteine 314, cysteine 317, cysteine 321, cysteine 364, cysteine 367, and cysteine 371.

It belongs to the LutB/YkgF family.

Is involved in L-lactate degradation and allows cells to grow with lactate as the sole carbon source. Has probably a role as an electron transporter during oxidation of L-lactate. This Bacillus mycoides (strain KBAB4) (Bacillus weihenstephanensis) protein is Lactate utilization protein B 2.